The chain runs to 84 residues: Exodeoxyribonuclease 7 small subunit (84 aa).

It belongs to the XseB family. Heterooligomer composed of large and small subunits.

It is found in the cytoplasm. The enzyme catalyses Exonucleolytic cleavage in either 5'- to 3'- or 3'- to 5'-direction to yield nucleoside 5'-phosphates.. Its function is as follows. Bidirectionally degrades single-stranded DNA into large acid-insoluble oligonucleotides, which are then degraded further into small acid-soluble oligonucleotides. The polypeptide is Exodeoxyribonuclease 7 small subunit (Bacillus velezensis (strain DSM 23117 / BGSC 10A6 / LMG 26770 / FZB42) (Bacillus amyloliquefaciens subsp. plantarum)).